The chain runs to 58 residues: Large ribosomal subunit protein bL32 (58 aa).

It belongs to the bacterial ribosomal protein bL32 family.

The polypeptide is Large ribosomal subunit protein bL32 (Limosilactobacillus fermentum (strain NBRC 3956 / LMG 18251) (Lactobacillus fermentum)).